The primary structure comprises 159 residues: Small ribosomal subunit protein uS7 (159 aa).

This sequence belongs to the universal ribosomal protein uS7 family. In terms of assembly, part of the 30S ribosomal subunit. Contacts proteins S9 and S11.

Functionally, one of the primary rRNA binding proteins, it binds directly to 16S rRNA where it nucleates assembly of the head domain of the 30S subunit. Is located at the subunit interface close to the decoding center, probably blocks exit of the E-site tRNA. In Wolbachia sp. subsp. Brugia malayi (strain TRS), this protein is Small ribosomal subunit protein uS7.